We begin with the raw amino-acid sequence, 260 residues long: UPF0246 protein Bamb_2261 (260 aa).

This sequence belongs to the UPF0246 family.

This Burkholderia ambifaria (strain ATCC BAA-244 / DSM 16087 / CCUG 44356 / LMG 19182 / AMMD) (Burkholderia cepacia (strain AMMD)) protein is UPF0246 protein Bamb_2261.